The sequence spans 301 residues: MTAKFNVKTFQGMILALQDYWANQGCTVVQPFDMEVGAGTSHPMTCLRALGPEPMAFAYVQPSRRPTDGRYGENPNRLQHYYQFQVVIKPSPDNIQELYLDSLKMLGFDPTQNDIRFVEDNWENPTLGAWGLGWEVWLNGMEVTQFTYFQQVGGLECKPVTGEITYGLERLAMYIQGVDSVYDLVWSDGPLGKTTYGDVFHQNEVEQSTYNFEYANTDFLFYCFDQYEKEAQELLALEKPLPLPAYERILKAAHSFNLLDARKAISVTERQRYILRIRTLTKGVAEAYYASREALGFPGCK.

This sequence belongs to the class-II aminoacyl-tRNA synthetase family. In terms of assembly, tetramer of two alpha and two beta subunits.

The protein localises to the cytoplasm. The catalysed reaction is tRNA(Gly) + glycine + ATP = glycyl-tRNA(Gly) + AMP + diphosphate. The sequence is that of Glycine--tRNA ligase alpha subunit from Glaesserella parasuis serovar 5 (strain SH0165) (Haemophilus parasuis).